The chain runs to 89 residues: Small membrane A-kinase anchor protein (89 aa).

The segment at 1–29 (MGCMKSKRRDPTQNSDSSEKVDGKPGKHG) is disordered. A lipid anchor (N-myristoyl glycine) is attached at Gly2. A compositionally biased stretch (basic and acidic residues) spans 17–29 (SSEKVDGKPGKHG).

This sequence belongs to the small membrane AKAP family. May be palmitoylated at Cys-3.

The protein resides in the cell membrane. Its function is as follows. Binds to type I regulatory subunits of protein kinase A and may anchor/target them to the plasma membrane. This chain is Small membrane A-kinase anchor protein, found in Danio rerio (Zebrafish).